The following is a 42-amino-acid chain: Photosystem II reaction center protein J (42 aa).

Residues 10-30 (IPLWLVATVAGLAVIALLGVF) form a helical membrane-spanning segment.

It belongs to the PsbJ family. PSII is composed of 1 copy each of membrane proteins PsbA, PsbB, PsbC, PsbD, PsbE, PsbF, PsbH, PsbI, PsbJ, PsbK, PsbL, PsbM, PsbT, PsbX, PsbY, PsbZ, Psb30/Ycf12, at least 3 peripheral proteins of the oxygen-evolving complex and a large number of cofactors. It forms dimeric complexes.

The protein localises to the plastid. Its subcellular location is the chloroplast thylakoid membrane. In terms of biological role, one of the components of the core complex of photosystem II (PSII). PSII is a light-driven water:plastoquinone oxidoreductase that uses light energy to abstract electrons from H(2)O, generating O(2) and a proton gradient subsequently used for ATP formation. It consists of a core antenna complex that captures photons, and an electron transfer chain that converts photonic excitation into a charge separation. The polypeptide is Photosystem II reaction center protein J (Chlorokybus atmophyticus (Soil alga)).